The following is a 425-amino-acid chain: MYNGIGLQTARGSGTNGYVQSNLSHLMQARRKIEYNGEDDLRKMEAELNRKPNEEIMDHNRKRQIEVKCTEFEMLLEDKGLDDEDIERKVGEYRKNLLKQLESGELNVDEELSTKESHARRRAAANNRDKMRNALGLGEDYVPGSSMAKMNKSDVVGAAMESELPQKDDKEKLLETLRLHRKSKKKQESSSSSSSSSSSSESSSEDEKHRKDRKKKEKKQKLKEMEKRREKLRQKERELLAVSDKVKKEEPAESSDEEDSRKDQRKPREDRRRSVERQDQREDRRDRRRSPEDPRERRRSPEDRTVRRRSPERRRQQRSPSVERRKSPQRRDERRRRHDSSENERRSTATASKKSRMDELEVKQEPPSDSEDYIAKTNLAPIRVEKSAEKVEKSRKSSSESSSGSSDSDSSSDSSSSSDSSSDSE.

The region spanning Met57 to Gln100 is the CWF21 domain. Disordered stretches follow at residues Asp109–Met131 and Glu161–Glu425. Residues Leu164–Arg178 show a composition bias toward basic and acidic residues. Over residues Ser189–Ser202 the composition is skewed to low complexity. Basic residues predominate over residues Arg210–Lys221. 2 stretches are compositionally biased toward basic and acidic residues: residues Leu222–Pro251 and Asp259–Thr305. Over residues Val306 to Gln317 the composition is skewed to basic residues. Basic and acidic residues-rich tracts occupy residues Ser321–Asp332, Ser355–Pro366, and Arg383–Ser398. Residues Ser399–Glu425 are compositionally biased toward low complexity.

Belongs to the CWC21 family. Interacts with RNA polymerase II subunit ama-1, binding to both hyperphosphorylated and hypophosphorylated forms, but more strongly when ama-1 is phosphorylated at 'Ser-5' of the C-terminal heptapeptide repeat. Interacts with pre-mRNA-processing factor prp-19. May also interact with pre-mRNA-splicing factor 8 homolog prp-8. As to expression, expressed in the proximal germline, but not in the most distal part where mitosis takes place. May be expressed ubiquitously in somatic cells.

It is found in the nucleus. The protein localises to the chromosome. The protein resides in the nuclear body. Functionally, plays a role in pre-mRNA splicing as component of the spliceosome. Involved in modulating global transcription, probably acting via interaction with RNA polymerase II. Influences the chromatin distribution and phosphorylation state of RNA polymerase II subunit ama-1. Involved in regulating the germline sex determination pathway. The polypeptide is SRRM2 protein homolog rsr-2 (Caenorhabditis elegans).